A 450-amino-acid chain; its full sequence is Divalent metal cation transporter MntH (450 aa).

The next 11 helical transmembrane spans lie at 44-64, 77-97, 121-141, 152-172, 181-201, 218-238, 273-293, 310-330, 366-386, 387-407, and 419-439; these read LLAF…PGNW, TLLS…SLAA, FLLW…EVIG, IPLI…LLLM, AFVI…IVAA, IFTN…TVMP, IALM…AATF, LLSP…ALLA, GIAI…GTAD, LLVF…IPLV, and FAIS…IVVL.

The protein belongs to the NRAMP family.

The protein resides in the cell inner membrane. H(+)-stimulated, divalent metal cation uptake system. This chain is Divalent metal cation transporter MntH, found in Bradyrhizobium diazoefficiens (strain JCM 10833 / BCRC 13528 / IAM 13628 / NBRC 14792 / USDA 110).